Consider the following 460-residue polypeptide: U-box domain-containing protein 9 (460 aa).

Positions 73–147 (SCPEEFRCPL…SKWCKKNGLE (75 aa)) constitute a U-box domain. ARM repeat units lie at residues 201–244 (TEFR…NISI), 248–287 (SNKK…TLSA), and 289–328 (DSNK…TLCI).

As to quaternary structure, binds to SD11, SD16, SD17, SD18, SD113, SD129 and SD25. In terms of processing, phosphorylated by SD1-6 and SD1-7.

It is found in the nucleus. It localises to the cell membrane. It catalyses the reaction S-ubiquitinyl-[E2 ubiquitin-conjugating enzyme]-L-cysteine + [acceptor protein]-L-lysine = [E2 ubiquitin-conjugating enzyme]-L-cysteine + N(6)-ubiquitinyl-[acceptor protein]-L-lysine.. It functions in the pathway protein modification; protein ubiquitination. In terms of biological role, functions as an E3 ubiquitin ligase. May be involved in the abscisic acid-mediated signaling pathway, at least during germination. This chain is U-box domain-containing protein 9 (PUB9), found in Arabidopsis thaliana (Mouse-ear cress).